A 776-amino-acid polypeptide reads, in one-letter code: Zinc finger CCCH-type antiviral protein 1 (776 aa).

Alanine 2 is subject to N-acetylalanine. The N-terminal domain stretch occupies residues 2–254 (ADPGVCCFIT…DRSKSRDRFL (253 aa)). The short motif at 69 to 76 (RARVCRRK) is the Nuclear localization signal element. 4 consecutive C3H1-type zinc fingers follow at residues 73 to 86 (CRRK…DSLH), 88 to 110 (CKLN…KYSH), 150 to 172 (CKSY…ERLH), and 169 to 193 (ERLH…SHNL). The segment at 221 to 249 (NKHARRNPPGTRAAHPHRRGGAHRDRSKS) is disordered. Residues 224 to 254 (ARRNPPGTRAAHPHRRGGAHRDRSKSRDRFL) are binding to EXOSC5. Phosphoserine; by GSK3-beta is present on residues serine 257, serine 262, serine 266, and serine 270. Serine 274 is subject to Phosphoserine. Phosphothreonine is present on threonine 278. The residue at position 283 (serine 283) is a Phosphoserine. The Nuclear export signal motif lies at 284 to 291 (LEDVSVDV). Residues 308 to 355 (PVSSKAAGVQGPSQMRASQEFSEDGNLDDIFSRNRSDSSSSRASAAKV) are disordered. Positions 318 to 327 (GPSQMRASQE) are enriched in polar residues. A phosphoserine mark is found at serine 325, serine 351, and serine 398. The span at 344–353 (DSSSSRASAA) shows a compositional bias: low complexity. The short motif at 405–406 (KK) is the Nuclear localization signal element. Positions 457–483 (WASASTHNAPNGSSQIMDETPNVSKSS) are disordered. Over residues 459–483 (SASTHNAPNGSSQIMDETPNVSKSS) the composition is skewed to polar residues. At tyrosine 501 the chain carries Phosphotyrosine. Residues 512–562 (LAVPGEATTPVQSNRLPQSPLSSSSHRAAASGSPGKNSTHTSVSPAIESSR) are disordered. Residues 523 to 546 (QSNRLPQSPLSSSSHRAAASGSPG) show a composition bias toward low complexity. Serine 544 and serine 667 each carry phosphoserine. Positions 671-758 (YEEKPLSAVF…ASKTQRHVVR (88 aa)) constitute a WWE domain.

Belongs to the ARTD/PARP family. Homodimer or homooligomer. Homooligomerization is essential for its antiviral activity. Interacts with EXOSC5. Interacts with EXOSC3, EXOSC7, DCP2 and DCP1A. Interacts with PARN in an RNA-independent manner. Interacts with XRN1 in an RNA-dependent manner. Interacts (via N-terminal domain) with DHX30 (via N-terminus) in an RNA-independent manner. Interacts (via N-terminal domain) with DDX17 in an RNA-independent manner. In terms of processing, phosphorylation at Ser-274 is essential for sequential phosphorylation of Ser-270, Ser-266, Ser-262 and Ser-257 by GSK3-beta. Phosphorylation by GSK3-beta enhances its antiviral activity. Expressed in the kidney and liver.

The protein resides in the cytoplasm. It localises to the nucleus. In terms of biological role, antiviral protein which inhibits the replication of viruses by recruiting the cellular RNA degradation machineries to degrade the viral mRNAs. Binds to a ZAP-responsive element (ZRE) present in the target viral mRNA, recruits cellular poly(A)-specific ribonuclease PARN to remove the poly(A) tail, and the 3'-5' exoribonuclease complex exosome to degrade the RNA body from the 3'-end. It also recruits the decapping complex DCP1-DCP2 through RNA helicase p72 (DDX17) to remove the cap structure of the viral mRNA to initiate its degradation from the 5'-end. Its target viruses belong to families which include retroviridae: human immunodeficiency virus type 1 (HIV-1) and moloney and murine leukemia virus (MoMLV), filoviridae: ebola virus (EBOV) and marburg virus (MARV), togaviridae: sindbis virus (SINV) and Ross river virus (RRV). Specifically targets the multiply spliced but not unspliced or singly spliced HIV-1 mRNAs for degradation. The sequence is that of Zinc finger CCCH-type antiviral protein 1 (Zc3hav1) from Rattus norvegicus (Rat).